Consider the following 599-residue polypeptide: ATP-dependent zinc metalloprotease FtsH 3 (599 aa).

Over 1–7 (MKYKKKN) the chain is Cytoplasmic. A helical transmembrane segment spans residues 8-28 (ILFITTIIVIYLAFLFNWLEI). Residues 29-128 (GIFKPKGESI…PFSWLLSIFS (100 aa)) are Extracellular-facing. Residues 129–149 (ILLNFINVLSSLVFTIYIFLA) traverse the membrane as a helical segment. Residues 150 to 599 (IHRESGKLNS…IEQLVVNTKK (450 aa)) are Cytoplasmic-facing. Residue 214–221 (GPPGTGKT) coordinates ATP. Zn(2+) is bound at residue histidine 436. Residue glutamate 437 is part of the active site. Zn(2+)-binding residues include histidine 440 and aspartate 512.

It in the central section; belongs to the AAA ATPase family. In the C-terminal section; belongs to the peptidase M41 family. Homohexamer. Zn(2+) serves as cofactor.

It localises to the cell membrane. Acts as a processive, ATP-dependent zinc metallopeptidase for both cytoplasmic and membrane proteins. Plays a role in the quality control of integral membrane proteins. This is ATP-dependent zinc metalloprotease FtsH 3 from Phytoplasma mali (strain AT).